A 415-amino-acid polypeptide reads, in one-letter code: Phosphoribosylamine--glycine ligase (415 aa).

The ATP-grasp domain occupies 108-311 (KKIMEKYNIP…LMQHIIDLDE (204 aa)). Position 134–191 (134–191 (IENCEFPVVVKKDGLAAGKGVIIADTIEAARSAIEIMYGDEEEGTVVFETFLEGEEFS)) interacts with ATP. Glutamate 281 and asparagine 283 together coordinate Mg(2+).

This sequence belongs to the GARS family. Requires Mg(2+) as cofactor. It depends on Mn(2+) as a cofactor.

It carries out the reaction 5-phospho-beta-D-ribosylamine + glycine + ATP = N(1)-(5-phospho-beta-D-ribosyl)glycinamide + ADP + phosphate + H(+). It participates in purine metabolism; IMP biosynthesis via de novo pathway; N(1)-(5-phospho-D-ribosyl)glycinamide from 5-phospho-alpha-D-ribose 1-diphosphate: step 2/2. This Staphylococcus aureus (strain MRSA252) protein is Phosphoribosylamine--glycine ligase.